The chain runs to 279 residues: MGNATQVETDSAALMAEPRLVAETGVAARIAHIATPVLADLGYRLVRVKLSAQDGMTVQIMAERPDGAMTVNDCEAVSAALSPALDVEDVVKQAYRLEISSPGIDRPLVRVSDFRRALDQEARIELRLGLDGRKRFRGLIKGVTGAGAAAVVTLERVDAKPGEAVEAVLPLDDLAEAKLVLTEELIRAALRAAKAALAEEGEPEEQEEGGGEAAPAGKAERGPGRFTPKPAKAKSAQGKPVKAKPVLPAGVKTQFKQLKSGRLQGLAREGAPALRPTPK.

Residues 197–279 (LAEEGEPEEQ…GAPALRPTPK (83 aa)) are disordered. Positions 199–210 (EEGEPEEQEEGG) are enriched in acidic residues.

It belongs to the RimP family.

The protein resides in the cytoplasm. Required for maturation of 30S ribosomal subunits. This chain is Ribosome maturation factor RimP, found in Methylocella silvestris (strain DSM 15510 / CIP 108128 / LMG 27833 / NCIMB 13906 / BL2).